We begin with the raw amino-acid sequence, 132 residues long: Transmembrane protein 170B (132 aa).

Over 1-37 (MKAEGGDHSMINLSVQQVLSLWAHGTVLRNLTEMWYW) the chain is Extracellular. An N-linked (GlcNAc...) asparagine glycan is attached at N12. The chain crosses the membrane as a helical span at residues 38–58 (IFLWALFSSLFVHGAAGVLMF). Residues 59-68 (VMLQRHRQGR) lie on the Cytoplasmic side of the membrane. The helical transmembrane segment at 69–89 (VISVIAVSIGFLASVTGAMIT) threads the bilayer. Residues 90–104 (SAAVAGIYRVAGKNM) lie on the Extracellular side of the membrane. A helical transmembrane segment spans residues 105–125 (APLEALVWGVGQTVLTLIISF). The Cytoplasmic portion of the chain corresponds to 126–132 (SRILATL).

It belongs to the TMEM170 family. Interacts with CTNNB1. In terms of tissue distribution, expressed in normal breast tissues. Down-regulated in breast cancer cells (at protein level).

It is found in the cell membrane. Its function is as follows. Negatively regulates the canonical Wnt signaling in breast cancer cells. Exerts an inhibitory effect on breast cancer growth by inhibiting CTNNB1 stabilization and nucleus translocation, which reduces the activity of Wnt targets. The chain is Transmembrane protein 170B (TMEM170B) from Homo sapiens (Human).